The primary structure comprises 631 residues: Phosphomethylpyrimidine synthase (631 aa).

Residues N239, M268, Y297, H333, 353–355 (SRG), 394–397 (DGLR), and E433 each bind substrate. H437 is a binding site for Zn(2+). Y460 provides a ligand contact to substrate. H501 contributes to the Zn(2+) binding site. C581, C584, and C589 together coordinate [4Fe-4S] cluster.

The protein belongs to the ThiC family. Homodimer. The cofactor is [4Fe-4S] cluster.

The enzyme catalyses 5-amino-1-(5-phospho-beta-D-ribosyl)imidazole + S-adenosyl-L-methionine = 4-amino-2-methyl-5-(phosphooxymethyl)pyrimidine + CO + 5'-deoxyadenosine + formate + L-methionine + 3 H(+). Its pathway is cofactor biosynthesis; thiamine diphosphate biosynthesis. Its function is as follows. Catalyzes the synthesis of the hydroxymethylpyrimidine phosphate (HMP-P) moiety of thiamine from aminoimidazole ribotide (AIR) in a radical S-adenosyl-L-methionine (SAM)-dependent reaction. The chain is Phosphomethylpyrimidine synthase from Salmonella dublin (strain CT_02021853).